A 299-amino-acid chain; its full sequence is Taste receptor type 2 member 50 (299 aa).

Residue M1 is a topological domain, extracellular. The chain crosses the membrane as a helical span at residues 2-22; sequence IPFLHIFFSVLILVLFVLGNF. At 23–55 the chain is on the cytoplasmic side; it reads ANGFIALVNFIDWVKRKKISLADQILTALAVSR. A helical membrane pass occupies residues 56 to 76; that stretch reads VGLLWALLLNWYLTELNPAFY. The Extracellular segment spans residues 77 to 87; sequence SVELRITSYNA. Residues 88-108 form a helical membrane-spanning segment; the sequence is WVVTNHFSMWLAASLSIFYLL. The Cytoplasmic portion of the chain corresponds to 109-126; sequence KIANFSNLSFLNLKRRVR. A helical transmembrane segment spans residues 127-147; it reads SIILVILLGSLLFLVCHLLAV. At 148–181 the chain is on the extracellular side; that stretch reads NMDENMWTEEYEGNMTGKMKLRNAAHLSYMTVTT. N-linked (GlcNAc...) asparagine glycosylation occurs at N161. Residues 182-202 form a helical membrane-spanning segment; it reads LWSFIPFMLSLISFLMLIFSL. Topologically, residues 203–229 are cytoplasmic; it reads CKHLKKMQLHGEGSRDPSTTVHIKALQ. Residues 230 to 250 form a helical membrane-spanning segment; that stretch reads TLISFLLLCAIFFLFLIISVW. Topologically, residues 251-259 are extracellular; the sequence is SPRRLQNEP. A helical transmembrane segment spans residues 260 to 280; that stretch reads VFMVCKAVGNIYLSFDSFVLI. At 281 to 299 the chain is on the cytoplasmic side; it reads WRTKKLKHIFLLILCQIRC.

The protein belongs to the G-protein coupled receptor T2R family.

The protein resides in the membrane. Its function is as follows. Receptor that may play a role in the perception of bitterness and is gustducin-linked. May play a role in sensing the chemical composition of the gastrointestinal content. The activity of this receptor may stimulate alpha gustducin, mediate PLC-beta-2 activation and lead to the gating of TRPM5. The chain is Taste receptor type 2 member 50 (TAS2R50) from Macaca mulatta (Rhesus macaque).